Here is a 109-residue protein sequence, read N- to C-terminus: UPF0102 protein Suden_1901 (109 aa).

The protein belongs to the UPF0102 family.

This chain is UPF0102 protein Suden_1901, found in Sulfurimonas denitrificans (strain ATCC 33889 / DSM 1251) (Thiomicrospira denitrificans (strain ATCC 33889 / DSM 1251)).